A 249-amino-acid chain; its full sequence is Probable transcriptional regulatory protein Tfu_2096 (249 aa).

It belongs to the TACO1 family.

Its subcellular location is the cytoplasm. The polypeptide is Probable transcriptional regulatory protein Tfu_2096 (Thermobifida fusca (strain YX)).